Reading from the N-terminus, the 196-residue chain is Thymidine kinase (196 aa).

Residues 9 to 16 (SAMNAGKS) and 87 to 90 (DECQ) contribute to the ATP site. Glu88 serves as the catalytic Proton acceptor. 4 residues coordinate Zn(2+): Cys145, Cys147, Cys182, and His185.

Belongs to the thymidine kinase family. Homotetramer.

The protein localises to the cytoplasm. It carries out the reaction thymidine + ATP = dTMP + ADP + H(+). The sequence is that of Thymidine kinase from Yersinia pestis.